We begin with the raw amino-acid sequence, 270 residues long: tRNA pseudouridine synthase A (270 aa).

Catalysis depends on aspartate 51, which acts as the Nucleophile. A substrate-binding site is contributed by tyrosine 109.

The protein belongs to the tRNA pseudouridine synthase TruA family. Homodimer.

The enzyme catalyses uridine(38/39/40) in tRNA = pseudouridine(38/39/40) in tRNA. In terms of biological role, formation of pseudouridine at positions 38, 39 and 40 in the anticodon stem and loop of transfer RNAs. In Burkholderia multivorans (strain ATCC 17616 / 249), this protein is tRNA pseudouridine synthase A.